The following is a 269-amino-acid chain: 4-hydroxy-tetrahydrodipicolinate reductase (269 aa).

NAD(+) contacts are provided by residues 8–13 and glutamate 34; that span reads GAAGRM. Arginine 35 is a binding site for NADP(+). Residues 98-100 and 122-125 each bind NAD(+); these read GTT and APNY. Histidine 155 serves as the catalytic Proton donor/acceptor. Histidine 156 lines the (S)-2,3,4,5-tetrahydrodipicolinate pocket. The active-site Proton donor is the lysine 159. Position 165–166 (165–166) interacts with (S)-2,3,4,5-tetrahydrodipicolinate; sequence GT.

It belongs to the DapB family.

Its subcellular location is the cytoplasm. The catalysed reaction is (S)-2,3,4,5-tetrahydrodipicolinate + NAD(+) + H2O = (2S,4S)-4-hydroxy-2,3,4,5-tetrahydrodipicolinate + NADH + H(+). The enzyme catalyses (S)-2,3,4,5-tetrahydrodipicolinate + NADP(+) + H2O = (2S,4S)-4-hydroxy-2,3,4,5-tetrahydrodipicolinate + NADPH + H(+). It functions in the pathway amino-acid biosynthesis; L-lysine biosynthesis via DAP pathway; (S)-tetrahydrodipicolinate from L-aspartate: step 4/4. Functionally, catalyzes the conversion of 4-hydroxy-tetrahydrodipicolinate (HTPA) to tetrahydrodipicolinate. This is 4-hydroxy-tetrahydrodipicolinate reductase from Vibrio vulnificus (strain YJ016).